The following is a 386-amino-acid chain: SET and MYND domain-containing protein DDB_G0273589 (386 aa).

One can recognise an SET domain in the interval 6–294 (NGLELKSSEN…KGDQLTISYI (289 aa)). The segment at 51-94 (CFNCIKQLPSVIKLSLKCNQCNEIWYCNEQCKNENINKHQHYEC) adopts an MYND-type zinc-finger fold. Residues 136–171 (NNKFIEQQLNNNNNNNNDNEQLTNTLDDVFDLVENQ) adopt a coiled-coil conformation.

Belongs to the class V-like SAM-binding methyltransferase superfamily.

Functionally, probable methyltransferase. This is SET and MYND domain-containing protein DDB_G0273589 from Dictyostelium discoideum (Social amoeba).